A 1416-amino-acid chain; its full sequence is Tiny macrocysts protein B (1416 aa).

The next 8 helical transmembrane spans lie at 47 to 67 (ILTILSMLIEFCQLSSFGFKH), 93 to 113 (FGYLGFTILFWIAVGLLILGF), 140 to 160 (FVSFSVAVLFIPIISLLLIGL), 185 to 205 (ANLPIAVISIILIVVFSIVAF), 231 to 251 (VTVLFAKFVFAFFNSLVDFVP), 253 to 273 (LTSITFFVFMVILTFGSIIVL), 285 to 305 (SGFYTVVLWVSFMTLVTMGIN), and 315 to 335 (ITIVGVFFAFPIGFFSNMFYF). Residues 356–372 (LKDANKKGKRNSVEKES) are compositionally biased toward basic and acidic residues. 2 disordered regions span residues 356–377 (LKDANKKGKRNSVEKESSPTSK) and 662–691 (IEKSGSKSGSSKSKDDSSESSSSSKGRRGK). 2 consecutive transmembrane segments (helical) span residues 706 to 726 (WLMIGTTCCCIIFLIVVLVVF) and 953 to 973 (AILYTWCGIFAVLFLICAVLF). Disordered regions lie at residues 1018-1103 (RDNL…RPLM) and 1119-1144 (NVRLQAKDEEITNGGGERKGSDATRT). A compositionally biased stretch (acidic residues) spans 1024-1039 (TTDDDGRDDHLGEDDN). Low complexity-rich tracts occupy residues 1048–1062 (NNNNNNNNNNNNNNN) and 1083–1094 (SSSGSNVLNTSS). Positions 1123–1144 (QAKDEEITNGGGERKGSDATRT) are enriched in basic and acidic residues. A run of 3 helical transmembrane segments spans residues 1179–1199 (ILATFLLFGFITMGIWVTFTV), 1325–1345 (WFLALIDYIFIGLDTATFTYF), and 1358–1378 (VLTAILSVSCVILLVVHVVLF).

It is found in the membrane. Regulator of the cAMP signaling pathway specific to sexual development. Controls the levels of external cAMP by regulating the expression of phosphodiesterase pdsA and its inhibitor pdiA. The protein is Tiny macrocysts protein B (tmcB) of Dictyostelium discoideum (Social amoeba).